The sequence spans 1149 residues: Structural maintenance of chromosomes protein 6 homolog smc-6 (1149 aa).

G77–S84 contributes to the ATP binding site. Residues L309–D460 are a coiled coil. The flexible hinge stretch occupies residues I461–L687. A coiled-coil region spans residues Y714–D920. Disordered stretches follow at residues N875–E900 and E1026–L1060. The span at E1026–D1038 shows a compositional bias: acidic residues. Over residues P1042 to R1058 the composition is skewed to basic residues.

Belongs to the SMC family. SMC6 subfamily. As to quaternary structure, interacts with smc-5. As to expression, expressed in the germline (at protein level).

Its subcellular location is the nucleus. It is found in the chromosome. Core component of the smc-5/smc-6 complex. Involved in DNA double-strand break repair by promoting sister-chromatid homologous recombination during meiosis. Also plays a role in the DNA damage repair of ultraviolet (UV) radiation-induced DNA lesions. Promotes efficient DNA replication. The polypeptide is Structural maintenance of chromosomes protein 6 homolog smc-6 (Caenorhabditis elegans).